The sequence spans 328 residues: Formimidoylglutamase (328 aa).

Positions 133, 159, 161, 163, 253, and 255 each coordinate Mn(2+).

It belongs to the arginase family. The cofactor is Mn(2+).

The catalysed reaction is N-formimidoyl-L-glutamate + H2O = formamide + L-glutamate. It functions in the pathway amino-acid degradation; L-histidine degradation into L-glutamate; L-glutamate from N-formimidoyl-L-glutamate (hydrolase route): step 1/1. In terms of biological role, catalyzes the conversion of N-formimidoyl-L-glutamate to L-glutamate and formamide. This Streptococcus pyogenes serotype M1 protein is Formimidoylglutamase.